Consider the following 849-residue polypeptide: Autoinducer 1 sensor kinase/phosphatase LuxN (849 aa).

The next 7 membrane-spanning stretches (helical) occupy residues Ile9 to Phe29, Val41 to Ile61, Ser160 to Met180, Ile196 to Phe216, Phe220 to Leu242, Tyr251 to Ile275, and Trp283 to Tyr301. Residues Ser468–Pro683 enclose the Histidine kinase domain. His471 is modified (phosphohistidine; by autocatalysis). Residues Thr722–Leu835 enclose the Response regulatory domain. Asp771 carries the post-translational modification 4-aspartylphosphate.

Its subcellular location is the cell inner membrane. It catalyses the reaction ATP + protein L-histidine = ADP + protein N-phospho-L-histidine.. Its function is as follows. At low cell density, in the absence of AI-1 (autoinducer 1), LuxN has a kinase activity and autophosphorylates on His-471. The phosphoryl group is then transferred on Asp-771 of the response regulator domain. The phosphoryl group is transferred to LuxU, and ultimately to LuxO. At high cell density, in the presence of AI-1, the kinase activity is inactivated, and the response regulator domain has a phosphatase activity. LuxN phosphatase acts on itself. As LuxU could function to establish an equilibrium between the aspartyl-phosphate of LuxN and the aspartyl-phosphate of LuxO, LuxU transfers phosphate from LuxO to LuxN and finally phosphate is drained from the system. The sequence is that of Autoinducer 1 sensor kinase/phosphatase LuxN (luxN) from Vibrio harveyi (Beneckea harveyi).